The sequence spans 432 residues: Transcriptional adapter 3-A (432 aa).

2 disordered regions span residues 90 to 127 (HELG…RNMQ) and 275 to 314 (SPVE…TKSL). A compositionally biased stretch (polar residues) spans 293 to 305 (DGASTSPRSQNKP). Residues 335-398 (ADDSEDEVLA…NEVMDAFRKI (64 aa)) adopt a coiled-coil conformation.

Belongs to the NGG1 family.

Its subcellular location is the nucleus. Its function is as follows. Functions as a component of the PCAF complex. The PCAF complex is capable of efficiently acetylating histones in a nucleosomal context. The polypeptide is Transcriptional adapter 3-A (tada3-a) (Xenopus laevis (African clawed frog)).